The following is a 164-amino-acid chain: NADH-quinone oxidoreductase subunit I (164 aa).

4Fe-4S ferredoxin-type domains follow at residues 55 to 84 and 95 to 124; these read RRYE…IEID and KVYD…MGPY. Residues Cys-64, Cys-67, Cys-70, Cys-74, Cys-104, Cys-107, Cys-110, and Cys-114 each coordinate [4Fe-4S] cluster.

It belongs to the complex I 23 kDa subunit family. NDH-1 is composed of 14 different subunits. Subunits NuoA, H, J, K, L, M, N constitute the membrane sector of the complex. [4Fe-4S] cluster is required as a cofactor.

Its subcellular location is the cell inner membrane. The enzyme catalyses a quinone + NADH + 5 H(+)(in) = a quinol + NAD(+) + 4 H(+)(out). Functionally, NDH-1 shuttles electrons from NADH, via FMN and iron-sulfur (Fe-S) centers, to quinones in the respiratory chain. The immediate electron acceptor for the enzyme in this species is believed to be ubiquinone. Couples the redox reaction to proton translocation (for every two electrons transferred, four hydrogen ions are translocated across the cytoplasmic membrane), and thus conserves the redox energy in a proton gradient. The protein is NADH-quinone oxidoreductase subunit I of Magnetococcus marinus (strain ATCC BAA-1437 / JCM 17883 / MC-1).